A 120-amino-acid chain; its full sequence is Glycine cleavage system H protein (120 aa).

A Lipoyl-binding domain is found at 17 to 99 (IATVGITSHA…QGAGWLYRMR (83 aa)). Position 58 is an N6-lipoyllysine (Lys-58).

Belongs to the GcvH family. As to quaternary structure, the glycine cleavage system is composed of four proteins: P, T, L and H. The cofactor is (R)-lipoate.

In terms of biological role, the glycine cleavage system catalyzes the degradation of glycine. The H protein shuttles the methylamine group of glycine from the P protein to the T protein. This chain is Glycine cleavage system H protein, found in Methylobacterium nodulans (strain LMG 21967 / CNCM I-2342 / ORS 2060).